The sequence spans 273 residues: Urease accessory protein UreD (273 aa).

It belongs to the UreD family. UreD, UreF and UreG form a complex that acts as a GTP-hydrolysis-dependent molecular chaperone, activating the urease apoprotein by helping to assemble the nickel containing metallocenter of UreC. The UreE protein probably delivers the nickel.

It localises to the cytoplasm. Required for maturation of urease via the functional incorporation of the urease nickel metallocenter. The sequence is that of Urease accessory protein UreD from Rhizobium leguminosarum bv. viciae.